Consider the following 323-residue polypeptide: Thymidylate synthase (323 aa).

DUMP-binding positions include R21 and 172–173; that span reads RR. The active-site Nucleophile is the C192. DUMP contacts are provided by residues 214-217, N225, and 255-257; these read RSND and HVY. D217 is a (6R)-5,10-methylene-5,6,7,8-tetrahydrofolate binding site. A322 contributes to the (6R)-5,10-methylene-5,6,7,8-tetrahydrofolate binding site.

The protein belongs to the thymidylate synthase family. Bacterial-type ThyA subfamily. Homodimer.

The protein localises to the cytoplasm. It catalyses the reaction dUMP + (6R)-5,10-methylene-5,6,7,8-tetrahydrofolate = 7,8-dihydrofolate + dTMP. It participates in pyrimidine metabolism; dTTP biosynthesis. Functionally, catalyzes the reductive methylation of 2'-deoxyuridine-5'-monophosphate (dUMP) to 2'-deoxythymidine-5'-monophosphate (dTMP) while utilizing 5,10-methylenetetrahydrofolate (mTHF) as the methyl donor and reductant in the reaction, yielding dihydrofolate (DHF) as a by-product. This enzymatic reaction provides an intracellular de novo source of dTMP, an essential precursor for DNA biosynthesis. This Pseudomonas syringae pv. tomato (strain ATCC BAA-871 / DC3000) protein is Thymidylate synthase.